We begin with the raw amino-acid sequence, 78 residues long: Acyl carrier protein (78 aa).

The region spanning 1-76 is the Carrier domain; it reads MALFEDIQAV…DVVKYIEDNK (76 aa). Serine 36 is subject to O-(pantetheine 4'-phosphoryl)serine.

Belongs to the acyl carrier protein (ACP) family. Post-translationally, 4'-phosphopantetheine is transferred from CoA to a specific serine of apo-ACP by AcpS. This modification is essential for activity because fatty acids are bound in thioester linkage to the sulfhydryl of the prosthetic group.

The protein resides in the cytoplasm. Its pathway is lipid metabolism; fatty acid biosynthesis. Carrier of the growing fatty acid chain in fatty acid biosynthesis. The sequence is that of Acyl carrier protein from Helicobacter acinonychis (strain Sheeba).